Here is a 196-residue protein sequence, read N- to C-terminus: Peptidoglycan recognition protein (196 aa).

A signal peptide spans 1-23; sequence MARLHSAVVLALALSSLLTEIAA. Intrachain disulfides connect Cys-25-Cys-147 and Cys-61-Cys-67. An N-acetylmuramoyl-L-alanine amidase domain is found at 46–173; it reads RPVSLVIVQH…RQLIASESPG (128 aa).

Belongs to the N-acetylmuramoyl-L-alanine amidase 2 family. Monomer. In terms of tissue distribution, constitutively expressed in fat body, epithelial cells and hemocytes. Not detected in Malpighian tubules, silk gland or midgut.

Its function is as follows. Binds specifically to peptidoglycan and triggers the propenoloxidase cascade which is an important insect defense mechanism. In Bombyx mori (Silk moth), this protein is Peptidoglycan recognition protein.